A 447-amino-acid chain; its full sequence is Tol-Pal system protein TolB (447 aa).

An N-terminal signal peptide occupies residues 1–34 (MSSRLPALPLSRRQALLGGAGSAAALLLPGGAQA). A disordered region spans residues 426–447 (RNEQKVPTPGFASDPAWSPLLS).

The protein belongs to the TolB family. In terms of assembly, the Tol-Pal system is composed of five core proteins: the inner membrane proteins TolA, TolQ and TolR, the periplasmic protein TolB and the outer membrane protein Pal. They form a network linking the inner and outer membranes and the peptidoglycan layer.

It localises to the periplasm. Functionally, part of the Tol-Pal system, which plays a role in outer membrane invagination during cell division and is important for maintaining outer membrane integrity. The protein is Tol-Pal system protein TolB of Rhodopseudomonas palustris (strain BisB18).